The sequence spans 735 residues: Catalase-peroxidase (735 aa).

Residues 1-31 (MENNTNPISGQGKCPFSGGAAKQSAGAGTRN) form a disordered region. Over residues 17–28 (SGGAAKQSAGAG) the composition is skewed to low complexity. A cross-link (tryptophyl-tyrosyl-methioninium (Trp-Tyr) (with M-252)) is located at residues 103 to 226 (WHSAGTYRVA…LAAVQMGLIY (124 aa)). The active-site Proton acceptor is the His-104. The tryptophyl-tyrosyl-methioninium (Tyr-Met) (with W-103) cross-link spans 226-252 (YVNPEGPNGNPDPLASARDIRETFARM). Residue His-267 coordinates heme b. A disordered region spans residues 352–371 (KPKNGAGAGTVPDAHNSSKS).

The protein belongs to the peroxidase family. Peroxidase/catalase subfamily. In terms of assembly, homodimer or homotetramer. The cofactor is heme b. Post-translationally, formation of the three residue Trp-Tyr-Met cross-link is important for the catalase, but not the peroxidase activity of the enzyme.

It catalyses the reaction H2O2 + AH2 = A + 2 H2O. The enzyme catalyses 2 H2O2 = O2 + 2 H2O. Its function is as follows. Bifunctional enzyme with both catalase and broad-spectrum peroxidase activity. This is Catalase-peroxidase from Flavobacterium psychrophilum (strain ATCC 49511 / DSM 21280 / CIP 103535 / JIP02/86).